Consider the following 436-residue polypeptide: 3-ketoacyl-CoA thiolase (436 aa).

C99 (acyl-thioester intermediate) is an active-site residue. Active-site proton acceptor residues include H392 and C422.

Belongs to the thiolase-like superfamily. Thiolase family. In terms of assembly, heterotetramer of two alpha chains (FadJ) and two beta chains (FadI).

It is found in the cytoplasm. The enzyme catalyses an acyl-CoA + acetyl-CoA = a 3-oxoacyl-CoA + CoA. It participates in lipid metabolism; fatty acid beta-oxidation. In terms of biological role, catalyzes the final step of fatty acid oxidation in which acetyl-CoA is released and the CoA ester of a fatty acid two carbons shorter is formed. The chain is 3-ketoacyl-CoA thiolase from Shewanella denitrificans (strain OS217 / ATCC BAA-1090 / DSM 15013).